A 100-amino-acid polypeptide reads, in one-letter code: MKGATLTRADLCEAVHEEVGLTRQDCAGLVERTLDLVAEALEKGETVKLSGFGVFQVRDKRARMGRNPKTGEPAEIEPRRVIGFRASQVMKARIDRALGG.

Belongs to the bacterial histone-like protein family. Heterodimer of an alpha and a beta chain.

In terms of biological role, this protein is one of the two subunits of integration host factor, a specific DNA-binding protein that functions in genetic recombination as well as in transcriptional and translational control. The polypeptide is Integration host factor subunit alpha (Caulobacter sp. (strain K31)).